The chain runs to 860 residues: Transcription factor E2F8 (860 aa).

Disordered stretches follow at residues 1–27 (MENQKENLFSEPHKRGLMKSPLHPSSK) and 38–57 (DLGPLTTPTKPKEVSQGEPW). A phosphoserine mark is found at Ser-71 and Ser-102. DNA-binding regions lie at residues 113-182 (RKEK…TWHG) and 261-347 (RKDK…KWTG). 3 disordered regions span residues 407–433 (RRKISSAPSSPVKSNKAESSQNSPPVP), 532–616 (LTPP…PKED), and 745–803 (QMSA…QPVP). A phosphoserine mark is found at Ser-412 and Ser-416. Composition is skewed to polar residues over residues 412 to 429 (SAPSSPVKSNKAESSQNS) and 542 to 554 (VCPTQPSNATGSK). The span at 555 to 565 (DPTDAPAEKTA) shows a compositional bias: basic and acidic residues.

Belongs to the E2F/DP family. Interacts with HIF1A. Homodimer and heterodimer: mainly forms homodimers and, to a lesser extent, heterodimers with E2F8. Dimerization is important for DNA-binding. As to expression, highly expressed in liver, skin, thymus and testis. Expressed in trophoblast giant cells throughout placenta development (at protein level).

The protein localises to the nucleus. Functionally, atypical E2F transcription factor that participates in various processes such as angiogenesis and polyploidization of specialized cells. Mainly acts as a transcription repressor that binds DNA independently of DP proteins and specifically recognizes the E2 recognition site 5'-TTTC[CG]CGC-3'. Directly represses transcription of classical E2F transcription factors such as E2F1: component of a feedback loop in S phase by repressing the expression of E2F1, thereby preventing p53/TP53-dependent apoptosis. Plays a key role in polyploidization of cells in placenta and liver by regulating the endocycle, probably by repressing genes promoting cytokinesis and antagonizing action of classical E2F proteins (E2F1, E2F2 and/or E2F3). Required for placental development by promoting polyploidization of trophoblast giant cells. Acts as a promoter of sprouting angiogenesis, possibly by acting as a transcription activator: associates with HIF1A, recognizes and binds the VEGFA promoter, which is different from canonical E2 recognition site, and activates expression of the VEGFA gene. This chain is Transcription factor E2F8 (E2f8), found in Mus musculus (Mouse).